The following is a 397-amino-acid chain: Tryptophan synthase beta chain (397 aa).

Lysine 87 carries the post-translational modification N6-(pyridoxal phosphate)lysine.

This sequence belongs to the TrpB family. In terms of assembly, tetramer of two alpha and two beta chains. It depends on pyridoxal 5'-phosphate as a cofactor.

It carries out the reaction (1S,2R)-1-C-(indol-3-yl)glycerol 3-phosphate + L-serine = D-glyceraldehyde 3-phosphate + L-tryptophan + H2O. Its pathway is amino-acid biosynthesis; L-tryptophan biosynthesis; L-tryptophan from chorismate: step 5/5. Its function is as follows. The beta subunit is responsible for the synthesis of L-tryptophan from indole and L-serine. In Salmonella choleraesuis (strain SC-B67), this protein is Tryptophan synthase beta chain.